A 158-amino-acid polypeptide reads, in one-letter code: 6,7-dimethyl-8-ribityllumazine synthase (158 aa).

Residues Trp-28, 59 to 61, and 81 to 83 contribute to the 5-amino-6-(D-ribitylamino)uracil site; these read TVE and VVV. Position 86 to 87 (86 to 87) interacts with (2S)-2-hydroxy-3-oxobutyl phosphate; sequence DT. Residue His-89 is the Proton donor of the active site. Phe-114 contacts 5-amino-6-(D-ribitylamino)uracil. Position 128 (Arg-128) interacts with (2S)-2-hydroxy-3-oxobutyl phosphate.

This sequence belongs to the DMRL synthase family.

The enzyme catalyses (2S)-2-hydroxy-3-oxobutyl phosphate + 5-amino-6-(D-ribitylamino)uracil = 6,7-dimethyl-8-(1-D-ribityl)lumazine + phosphate + 2 H2O + H(+). Its pathway is cofactor biosynthesis; riboflavin biosynthesis; riboflavin from 2-hydroxy-3-oxobutyl phosphate and 5-amino-6-(D-ribitylamino)uracil: step 1/2. Its function is as follows. Catalyzes the formation of 6,7-dimethyl-8-ribityllumazine by condensation of 5-amino-6-(D-ribitylamino)uracil with 3,4-dihydroxy-2-butanone 4-phosphate. This is the penultimate step in the biosynthesis of riboflavin. The sequence is that of 6,7-dimethyl-8-ribityllumazine synthase from Micrococcus luteus (strain ATCC 4698 / DSM 20030 / JCM 1464 / CCM 169 / CCUG 5858 / IAM 1056 / NBRC 3333 / NCIMB 9278 / NCTC 2665 / VKM Ac-2230) (Micrococcus lysodeikticus).